Consider the following 926-residue polypeptide: Disease resistance protein RPM1 (926 aa).

The tract at residues 10-45 is leucine-zipper; the sequence is IGRILSVLENETLLLSGVHGEIDKMKKELLIMKSFL. Residues 153–467 form the NB-ARC domain; that stretch reads DAKWVNNISE…AQRFVEPIRG (315 aa). 200-207 serves as a coordination point for ATP; it reads GMGGSGKT. LRR repeat units follow at residues 561 to 580, 581 to 603, 605 to 625, 626 to 649, 686 to 707, 708 to 731, 756 to 777, 778 to 804, 825 to 836, 837 to 859, and 876 to 900; these read LHSL…LPSL, NLLR…LVTM, NLKY…NFHK, LVNL…MWKL, LQVM…CMTQ, LTRI…LNKI, TASI…WFNT, LQNL…TLPR, FQNLKILEIVQM, KHLT…YVRA, and LQEL…SVDR.

The protein belongs to the disease resistance NB-LRR family. As to quaternary structure, interacts directly with RIN4 via its N-terminal region. Interacts (via N-terminus) with RIN2 and RIN3 (via C-terminus). Interacts with TIP49A, a protein known to interact with the TATA binding protein complex (TBP). Binds to MORC1/CRT1. Interacts, via its NB-ARC domain, with RIN13.

It is found in the endomembrane system. It localises to the cell membrane. In terms of biological role, disease resistance (R) protein that specifically recognizes the AvrRpm1 type III effector avirulence protein from Pseudomonas syringae. Resistance proteins guard the plant against pathogens that contain an appropriate avirulence protein via an indirect interaction with this avirulence protein. That triggers a defense system including the hypersensitive response (HR), which restricts the pathogen growth. Acts via its interaction with RIN4, and probably triggers the plant resistance when RIN4 is phosphorylated by AvrRpm1. It is then degraded at the onset of the hypersensitive response. The sequence is that of Disease resistance protein RPM1 from Arabidopsis thaliana (Mouse-ear cress).